Reading from the N-terminus, the 766-residue chain is MGSAQARQRLLAIFGQVQAYIFQVEMLKRCDPLALLPLVGSLKLNALTIRMLRRKLGGALIEQAQHQQTPLACALTMALEYAEVEGERVLRAVDDVNLAGPEGFFRATMRLDEPCEYHVRVHLDTYGGPIDAEVQFLHDAENFLKQLNYCHLITGFEAGLDALESVARFLTRTVGSGIVVPPELCDPTHPCSVCFEELCVTANQGEAVHRRLLECTCDHITRQMAVRVANIDIARHLPHALSVASERRAAAEAALRALEARRVQGHNGKSAGTEDPTQQVASRLLESHHVFKPASRCLYAVSELKFWLASTKHGDMGQPRAIDTFTENLETLDKQEKFFHLQAATVELALFGRTLDHFDRLFADQLLGLDVIDGMLVGSCAVSPDDHIEALIKACYTHHMSAPLLQRLTDPDTSNREALKQLLGRIGVDTDDGAGELGDALDVDLDNLGGAPPVNSTPCGEDALCRTVSEERPWDKLLERATADASQRRRMYAERLSKRSIASLGRCVREQRRELEKTLRVNVYGEVLLHTYVSSYNGFCARRGFCAAVSRAGTIIDNRSSTSAFDSHQFMKAALLRHPIDQSLMPSITHKFFELINGPVFDNAGHNFAQPPNTALYYSVENVGLLPHLKEELARFMITAAKGDWSISEFQRFYCFEGVTGVTATQRLAWKYIGELILAAAVFSSVFHCGEVRLLRADRTYPDSSGAQRCVSGIYITYEASCPLVAVLSAAPHGAIGAETVVIYDSDVFSLLYAVLQQLAPGSGAN.

The C3H1-type zinc finger occupies 191 to 219 (CSVCFEELCVTANQGEAVHRRLLECTCDH). 683–690 (FSSVFHCG) provides a ligand contact to ATP.

It belongs to the herpesviridae TRM1 protein family. In terms of assembly, associates with TRM2 and TRM3 to form the tripartite terminase complex. Interacts with portal protein.

Its subcellular location is the host nucleus. In terms of biological role, component of the molecular motor that translocates viral genomic DNA in empty capsid during DNA packaging. Forms a tripartite terminase complex together with TRM2 and TRM3 in the host cytoplasm. Once the complex reaches the host nucleus, it interacts with the capsid portal vertex. This portal forms a ring in which genomic DNA is translocated into the capsid. TRM1 carries an endonuclease activity that plays an important role for the cleavage of concatemeric viral DNA into unit length genomes. This is Tripartite terminase subunit 1 from Equus caballus (Horse).